The primary structure comprises 379 residues: UDP-N-acetylglucosamine--N-acetylmuramyl-(pentapeptide) pyrophosphoryl-undecaprenol N-acetylglucosamine transferase (379 aa).

UDP-N-acetyl-alpha-D-glucosamine contacts are provided by residues Thr17 to Gly19, Asn128, Arg169, Ser197, and Gln298.

This sequence belongs to the glycosyltransferase 28 family. MurG subfamily.

It localises to the cell inner membrane. The catalysed reaction is di-trans,octa-cis-undecaprenyl diphospho-N-acetyl-alpha-D-muramoyl-L-alanyl-D-glutamyl-meso-2,6-diaminopimeloyl-D-alanyl-D-alanine + UDP-N-acetyl-alpha-D-glucosamine = di-trans,octa-cis-undecaprenyl diphospho-[N-acetyl-alpha-D-glucosaminyl-(1-&gt;4)]-N-acetyl-alpha-D-muramoyl-L-alanyl-D-glutamyl-meso-2,6-diaminopimeloyl-D-alanyl-D-alanine + UDP + H(+). It participates in cell wall biogenesis; peptidoglycan biosynthesis. Its function is as follows. Cell wall formation. Catalyzes the transfer of a GlcNAc subunit on undecaprenyl-pyrophosphoryl-MurNAc-pentapeptide (lipid intermediate I) to form undecaprenyl-pyrophosphoryl-MurNAc-(pentapeptide)GlcNAc (lipid intermediate II). The polypeptide is UDP-N-acetylglucosamine--N-acetylmuramyl-(pentapeptide) pyrophosphoryl-undecaprenol N-acetylglucosamine transferase (Brucella suis (strain ATCC 23445 / NCTC 10510)).